Consider the following 941-residue polypeptide: Protocadherin alpha-12 (941 aa).

The signal sequence occupies residues 1-29 (MVIIGPRGPGSQRLLLSLLLLAAWEVGSG). Cadherin domains are found at residues 30-133 (QLHY…PPVF), 134-242 (RERE…GPAF), 243-350 (DKPS…VPEV), 351-455 (MVTS…APAF), 456-565 (AQPE…APAL), and 581-678 (VPRS…APKT). At 30–697 (QLHYSVYEEA…DPEAALVDIN (668 aa)) the chain is on the extracellular side. Asn257 and Asn265 each carry an N-linked (GlcNAc...) asparagine glycan. The N-linked (GlcNAc...) asparagine glycan is linked to Asn548. Residues 698-718 (VYLIIAICAVSSLLVLTLLLY) traverse the membrane as a helical segment. Residues 719–941 (TALRCSAPPT…GNSTTDNSDQ (223 aa)) lie on the Cytoplasmic side of the membrane. PXXP repeat units follow at residues 734–737 (PGKP), 790–793 (PRQP), 823–826 (PGGP), 863–866 (GPGN), and 882–885 (PGSP). The segment at 734–885 (PGKPTLVCSS…PDKFIIPGSP (152 aa)) is 5 X 4 AA repeats of P-X-X-P. The tract at residues 818–941 (ILRAGPGGPD…GNSTTDNSDQ (124 aa)) is disordered. Positions 900–914 (DKSDFITFGKKEETK) are enriched in basic and acidic residues.

It localises to the cell membrane. Its function is as follows. Potential calcium-dependent cell-adhesion protein. May be involved in the establishment and maintenance of specific neuronal connections in the brain. In Pan troglodytes (Chimpanzee), this protein is Protocadherin alpha-12 (PCDHA12).